We begin with the raw amino-acid sequence, 154 residues long: 17 kDa surface antigen (154 aa).

The N-terminal stretch at 1-19 (MKLLSKIMVIALATSMLQA) is a signal peptide. Cysteine 20 is lipidated: N-palmitoyl cysteine. Cysteine 20 is lipidated: S-diacylglycerol cysteine.

The protein belongs to the rickettsiale 17 kDa surface antigen family.

Its subcellular location is the cell outer membrane. This Rickettsia parkeri protein is 17 kDa surface antigen (omp).